The chain runs to 338 residues: MKELDQILEKCAEEIDPLSHEIAERIRKLKNLPKDEMFLEYLRIIDFTSTTKIPWRKKNYILIILWKYGEKIERLLYSRLEHFGRANVPKRYFRLVDGKILSMLFLVFILFPAFTSHIWSFRLGYEEIQVGKEITFNENLCEYRTAWLYDFKASMVCTIKYGYGKVNIRLNSTNPMEAGVEVQRFISQIPYDYARLESGFSYIQTPRETIGRRIGVCSDFAILTAQVLLDNNVSPVYIIHTLFKGDITGGHATAALFINGTLWIFDWGSAPVTFSEYLDTIDRLWEVREVRVYRLTESSIVLDRVYKGEPESDAWRYVYTLTMLIGIFIIKRREWLWI.

The chain crosses the membrane as a helical span at residues 100-120 (ILSMLFLVFILFPAFTSHIWS).

It belongs to the UPF0252 family.

It localises to the membrane. This Pyrococcus furiosus (strain ATCC 43587 / DSM 3638 / JCM 8422 / Vc1) protein is UPF0252 protein PF1496.